The primary structure comprises 220 residues: ATP-dependent Clp protease proteolytic subunit (220 aa).

Serine 125 (nucleophile) is an active-site residue. Histidine 150 is an active-site residue.

Belongs to the peptidase S14 family. As to quaternary structure, fourteen ClpP subunits assemble into 2 heptameric rings which stack back to back to give a disk-like structure with a central cavity, resembling the structure of eukaryotic proteasomes.

It is found in the cytoplasm. The enzyme catalyses Hydrolysis of proteins to small peptides in the presence of ATP and magnesium. alpha-casein is the usual test substrate. In the absence of ATP, only oligopeptides shorter than five residues are hydrolyzed (such as succinyl-Leu-Tyr-|-NHMec, and Leu-Tyr-Leu-|-Tyr-Trp, in which cleavage of the -Tyr-|-Leu- and -Tyr-|-Trp bonds also occurs).. Functionally, cleaves peptides in various proteins in a process that requires ATP hydrolysis. Has a chymotrypsin-like activity. Plays a major role in the degradation of misfolded proteins. The sequence is that of ATP-dependent Clp protease proteolytic subunit from Bacteroides fragilis (strain YCH46).